A 543-amino-acid chain; its full sequence is Ribonuclease Y (543 aa).

Residues 4-24 (IIMIPVATAIVSLLVGTVIGY) form a helical membrane-spanning segment. A KH domain is found at 233–296 (TVSVVDLPNE…EIAKRAMERL (64 aa)). The 94-residue stretch at 359 to 452 (VLSHSIEVGK…VVAADTISSA (94 aa)) folds into the HD domain.

The protein belongs to the RNase Y family.

It localises to the cell membrane. In terms of biological role, endoribonuclease that initiates mRNA decay. This is Ribonuclease Y from Lactobacillus helveticus (strain DPC 4571).